Consider the following 199-residue polypeptide: MRYSPLIDQLIESLRCLPGVGPRSAQRMAFHLLQRDRDGGRRLATAIREAMDQVGHCRQCRVLTEEPVCGLCASDRRDRSLLCVVEGPADVFALEQATDFRGLYFVLMGRLSPLDGVGPEALGLDRLEARLAEGEVQEVILATSPTVEGEATSHYIAELAHQRGVRTTRIAHGVPMGGELEYVDSGTLSHAFAGRRDYD.

The C4-type zinc-finger motif lies at 57 to 72 (CRQCRVLTEEPVCGLC). A Toprim domain is found at 80–175 (SLLCVVEGPA…RTTRIAHGVP (96 aa)).

Belongs to the RecR family.

Functionally, may play a role in DNA repair. It seems to be involved in an RecBC-independent recombinational process of DNA repair. It may act with RecF and RecO. This Alkalilimnicola ehrlichii (strain ATCC BAA-1101 / DSM 17681 / MLHE-1) protein is Recombination protein RecR.